We begin with the raw amino-acid sequence, 277 residues long: Small ribosomal subunit protein mS23 (277 aa).

Disordered stretches follow at residues 48-85 (APSH…KKPS) and 232-277 (LAAF…GPPI). The segment covering 244–269 (ESGESEDEIPLIEEEDAIGASEESET) has biased composition (acidic residues).

The protein belongs to the mitochondrion-specific ribosomal protein mS23 family. Component of the mitochondrial small ribosomal subunit.

It localises to the mitochondrion. The polypeptide is Small ribosomal subunit protein mS23 (RSM25) (Ajellomyces capsulatus (strain NAm1 / WU24) (Darling's disease fungus)).